We begin with the raw amino-acid sequence, 245 residues long: MYPVDLHMHTVASTHAYSTLSDYIAEAKRKGIKLFAITDHGPDMEDAPHHWHFINMRIWPRLVDGVGILRGIEANIKNINGEIDCSGKMFDSLDLIIAGFHEPVFAPHDKETNTQAMIATIASGKVHIISHPGNPKYPVEVKAIAQAAAKHHVALEINNSSFLHSRKGSEDNCRAVAAAVRDAGGWVALGSDSHTAFTLGDFTECRKILDAVNFPEDRILNVSPQCLLAFLESRGMAPVPEFAEL.

9 residues coordinate Zn(2+): His7, His9, His15, His40, Glu73, His101, His131, Asp192, and His194.

Belongs to the PHP family. In terms of assembly, homotrimer. The cofactor is Zn(2+).

This chain is Probable phosphatase YcdX, found in Salmonella heidelberg (strain SL476).